We begin with the raw amino-acid sequence, 206 residues long: Protein FAM228A (206 aa).

It belongs to the FAM228 family.

This Homo sapiens (Human) protein is Protein FAM228A (FAM228A).